A 1221-amino-acid chain; its full sequence is Reverse gyrase subunit B (1221 aa).

The RG N-terminal-type zinc-finger motif lies at 56–97; sequence NEPVAIFGSSCVLCGGDCSSVRLTSRIGICERCLPVDTETLR. 4 residues coordinate Zn(2+): C66, C69, C85, and C88. ATP is bound by residues Q161 and 178–185; that span reads APTGTGKT. Residues 165–400 enclose the Helicase ATP-binding domain; it reads TRRLVKGCSF…AVVRELFDFE (236 aa). The DEAD box motif lies at 284 to 287; it reads DDVD. Residues 424–600 enclose the Helicase C-terminal domain; that stretch reads AVERIVRKAG…PLSLNTLMKL (177 aa). A Toprim domain is found at 779–935; the sequence is SALMIVESPN…QVYRTEFHEV (157 aa). E785 contributes to the Mg(2+) binding site. Residues 856–882 form an RG C-terminal-type zinc finger; the sequence is LGRCSECGEQVVGSEECPNCGGEVELK. Residues C859, C862, C872, and C875 each contribute to the Zn(2+) site. D904 is a Mg(2+) binding site. A Topo IA-type catalytic domain is found at 953 to 1221; it reads DAGRVSAQIL…MLHLAGVSGR (269 aa).

In the C-terminal section; belongs to the type IA topoisomerase family. This sequence in the N-terminal section; belongs to the DEAD box helicase family. DDVD subfamily. In terms of assembly, heterodimer of an RgyrA and RgyrB subunit. The topoisomerase domain is shared between the two subunits. Zn(2+) serves as cofactor. Mg(2+) is required as a cofactor. Post-translationally, the N-terminus is partially blocked.

Its subcellular location is the cytoplasm. It catalyses the reaction ATP + H2O = ADP + phosphate + H(+). Its function is as follows. Modifies the topological state of DNA by introducing positive supercoils in an ATP-dependent process; dATP also allows positive supercoiling. Increases the linking number in steps of +1. Only this subunit binds ATP, it does so in a DNA- and RgyA-independent manner. Hydrolyzes ATP only in the presence of DNA. The RgyA subunit transiently cleaves a single DNA strand and remains covalently bound to the 5' DNA end probably through a tyrosine residue. It changes linking number in steps of one, and nicks DNA preferentially at 5'-CNNN | 3'-sites with a strong preference for 4 pyrimidine residues. There are about 1000 heterodimers per cell. May be involved in rewinding the DNA strands in the regions of the chromosome that have opened up to allow transcription or replication. Functionally, this subunit expressed in E.coli only has DNA-dependent ATPase activity at 80 degrees Celsius. Reverse gyrase activity is reconstituted after incubation at 80 degrees Celsius for 5 minutes, positive supercoiling requires ATP and Mg(2+). In the presence of ATP it binds and nicks substrate but does not make closed product. This is Reverse gyrase subunit B from Methanopyrus kandleri (strain AV19 / DSM 6324 / JCM 9639 / NBRC 100938).